The sequence spans 324 residues: Serine racemase (324 aa).

ATP-binding residues include Ser32, Lys51, and Thr52. The active-site Proton acceptor is the Lys56. N6-(pyridoxal phosphate)lysine is present on Lys56. Thr78 contacts Ca(2+). Catalysis depends on Ser81, which acts as the Proton acceptor. Asn83 is a pyridoxal 5'-phosphate binding site. Residues Gln86 and Tyr118 each coordinate ATP. Asp175 contributes to the Mg(2+) binding site. Residues Gly182, Gly183, Gly184, and Gly185 each contribute to the pyridoxal 5'-phosphate site. Positions 207, 211, and 213 each coordinate Ca(2+). Mg(2+) contacts are provided by Glu207, Ala211, and Asp213. Residues Glu207, Ala211, and Asp213 each contribute to the Mn(2+) site. Lys277 serves as a coordination point for ATP. Pyridoxal 5'-phosphate is bound at residue Ser310. Asn313 is a binding site for ATP.

The protein belongs to the serine/threonine dehydratase family. Homodimer. Mg(2+) serves as cofactor. Mn(2+) is required as a cofactor. The cofactor is Ca(2+). It depends on pyridoxal 5'-phosphate as a cofactor.

It catalyses the reaction L-serine = D-serine. The enzyme catalyses L-serine = pyruvate + NH4(+). The catalysed reaction is D-serine = pyruvate + NH4(+). Its function is as follows. Catalyzes the synthesis of D-serine from L-serine. Has dehydratase activity towards both L-serine and D-serine. The protein is Serine racemase (srr) of Dictyostelium discoideum (Social amoeba).